The sequence spans 65 residues: Adrenergic toxin rho-elapitoxin-Dp1b (65 aa).

4 disulfide bridges follow: cysteine 3/cysteine 24, cysteine 17/cysteine 42, cysteine 46/cysteine 57, and cysteine 58/cysteine 63.

Belongs to the three-finger toxin family. Short-chain subfamily. Aminergic toxin sub-subfamily. In terms of tissue distribution, expressed by the venom gland.

The protein resides in the secreted. Functionally, highly potent on various alpha-adrenoceptors (ADRA) (subnanomolar affinity for ADRA1A). Order of potency is the following: ADRA1A (Ki=0.37 nM) &gt; ADRA1B (Ki=10.47 nM) &gt; ADRA1D (Ki=104.71 nM) &gt; ADRA2C (Ki=165.96 nM). Were also found to reversibly bind to muscarinic acetylcholine receptors (CHRM), but the affinity is much weaker (CHRM1, Ki=1778.28 nM; CHRM4, Ki=4466.84 nM; CHRM2, Ki=17782.79 nM). In Dendroaspis polylepis polylepis (Black mamba), this protein is Adrenergic toxin rho-elapitoxin-Dp1b.